Reading from the N-terminus, the 325-residue chain is Leucine-rich repeat protein FLOR 1 (325 aa).

10 LRR repeats span residues 65 to 88, 89 to 114, 115 to 140, 142 to 162, 163 to 185, 187 to 211, 213 to 233, 234 to 256, 257 to 280, and 281 to 305; these read NRRV…QIGD, LVDL…ITKL, KNLN…ELKS, TFLD…LSQM, PKLE…SFGS, VGNV…LSKY, FNAV…FFGR, NKTT…KVKF, ARSI…ALTK, and LHLE…LLQT.

It belongs to the polygalacturonase-inhibiting protein family. As to quaternary structure, interacts with MADS domain transcription factors during flower development. Component of a complex made of FLOR1, VSP1 and AGAMOUS (AG). Binds directly with AG. Confined to flowers and inflorescences (e.g. inflorescence meristems, floral meristems, stamens and carpels).

It is found in the cytoplasm. Its subcellular location is the nucleus. The protein localises to the perinuclear region. The protein resides in the cell membrane. Its function is as follows. Promotes flowering transition in long days (LD). This is Leucine-rich repeat protein FLOR 1 from Arabidopsis thaliana (Mouse-ear cress).